The sequence spans 371 residues: tRNA-specific 2-thiouridylase MnmA (371 aa).

Residues 16–23 and Met-42 contribute to the ATP site; that span reads GMSGGVDS. The interaction with target base in tRNA stretch occupies residues 102 to 104; sequence NPD. Catalysis depends on Cys-107, which acts as the Nucleophile. A disulfide bridge links Cys-107 with Cys-204. Residue Gly-132 coordinates ATP. The segment at 154–156 is interaction with tRNA; sequence KDQ. Catalysis depends on Cys-204, which acts as the Cysteine persulfide intermediate. An interaction with tRNA region spans residues 316–317; sequence RY.

It belongs to the MnmA/TRMU family.

The protein localises to the cytoplasm. The catalysed reaction is S-sulfanyl-L-cysteinyl-[protein] + uridine(34) in tRNA + AH2 + ATP = 2-thiouridine(34) in tRNA + L-cysteinyl-[protein] + A + AMP + diphosphate + H(+). In terms of biological role, catalyzes the 2-thiolation of uridine at the wobble position (U34) of tRNA, leading to the formation of s(2)U34. The chain is tRNA-specific 2-thiouridylase MnmA from Shewanella piezotolerans (strain WP3 / JCM 13877).